The following is a 348-amino-acid chain: Glycerol-1-phosphate dehydrogenase [NAD(P)+] (348 aa).

Residues 94–98 (GKVID) and threonine 116 contribute to the NAD(+) site. Aspartate 121 contributes to the substrate binding site. An NAD(+)-binding site is contributed by serine 125. Aspartate 168 serves as a coordination point for substrate. 2 residues coordinate Zn(2+): aspartate 168 and histidine 248. Histidine 252 is a substrate binding site. A Zn(2+)-binding site is contributed by histidine 264.

It belongs to the glycerol-1-phosphate dehydrogenase family. Homooctamer. It depends on Zn(2+) as a cofactor.

Its subcellular location is the cytoplasm. The catalysed reaction is sn-glycerol 1-phosphate + NAD(+) = dihydroxyacetone phosphate + NADH + H(+). It catalyses the reaction sn-glycerol 1-phosphate + NADP(+) = dihydroxyacetone phosphate + NADPH + H(+). It participates in membrane lipid metabolism; glycerophospholipid metabolism. In terms of biological role, catalyzes the NAD(P)H-dependent reduction of dihydroxyacetonephosphate (DHAP or glycerone phosphate) to glycerol 1-phosphate (G1P). The G1P thus generated is used as the glycerophosphate backbone of phospholipids in the cellular membranes of Archaea. The polypeptide is Glycerol-1-phosphate dehydrogenase [NAD(P)+] (Methanosphaera stadtmanae (strain ATCC 43021 / DSM 3091 / JCM 11832 / MCB-3)).